Here is a 429-residue protein sequence, read N- to C-terminus: Enolase (429 aa).

Q163 is a binding site for (2R)-2-phosphoglycerate. E205 acts as the Proton donor in catalysis. Mg(2+) contacts are provided by D242, E287, and D314. (2R)-2-phosphoglycerate contacts are provided by K339, R368, S369, and K390. Residue K339 is the Proton acceptor of the active site.

This sequence belongs to the enolase family. The cofactor is Mg(2+).

It localises to the cytoplasm. Its subcellular location is the secreted. The protein localises to the cell surface. It catalyses the reaction (2R)-2-phosphoglycerate = phosphoenolpyruvate + H2O. The protein operates within carbohydrate degradation; glycolysis; pyruvate from D-glyceraldehyde 3-phosphate: step 4/5. Its function is as follows. Catalyzes the reversible conversion of 2-phosphoglycerate (2-PG) into phosphoenolpyruvate (PEP). It is essential for the degradation of carbohydrates via glycolysis. The polypeptide is Enolase (Magnetococcus marinus (strain ATCC BAA-1437 / JCM 17883 / MC-1)).